We begin with the raw amino-acid sequence, 514 residues long: Ferrochelatase-2, chloroplastic (514 aa).

This sequence belongs to the ferrochelatase family.

Its subcellular location is the plastid. The protein resides in the chloroplast. It carries out the reaction heme b + 2 H(+) = protoporphyrin IX + Fe(2+). It participates in porphyrin-containing compound metabolism; protoheme biosynthesis; protoheme from protoporphyrin-IX: step 1/1. Functionally, catalyzes the ferrous insertion into protoporphyrin IX. The chain is Ferrochelatase-2, chloroplastic (HEMH) from Cucumis sativus (Cucumber).